The primary structure comprises 358 residues: Isopentenyl-diphosphate delta-isomerase (358 aa).

A substrate-binding site is contributed by 12 to 13 (RK). FMN-binding positions include 69-71 (AMT), Ser99, and Asn128. Substrate is bound at residue Gln158. A Mg(2+)-binding site is contributed by Glu159. FMN contacts are provided by residues Lys190, Thr220, 267-269 (GIR), and 288-289 (AG).

It belongs to the IPP isomerase type 2 family. As to quaternary structure, homooctamer. Dimer of tetramers. The cofactor is FMN. Requires NADPH as cofactor. It depends on Mg(2+) as a cofactor.

It is found in the cytoplasm. It catalyses the reaction isopentenyl diphosphate = dimethylallyl diphosphate. Functionally, involved in the biosynthesis of isoprenoids. Catalyzes the 1,3-allylic rearrangement of the homoallylic substrate isopentenyl (IPP) to its allylic isomer, dimethylallyl diphosphate (DMAPP). This chain is Isopentenyl-diphosphate delta-isomerase, found in Listeria monocytogenes serotype 4b (strain CLIP80459).